The sequence spans 149 residues: Myoglobin (149 aa).

The residue at position 2 (valine 2) is an N-acetylvaline. Positions 2 to 143 (VDWEKVNSVW…ICSDIEKEYK (142 aa)) constitute a Globin domain. Heme b is bound at residue histidine 89.

Belongs to the globin family. In terms of assembly, monomeric.

It is found in the cytoplasm. The protein localises to the sarcoplasm. The catalysed reaction is Fe(III)-heme b-[protein] + nitric oxide + H2O = Fe(II)-heme b-[protein] + nitrite + 2 H(+). It carries out the reaction H2O2 + AH2 = A + 2 H2O. Its function is as follows. Monomeric heme protein which primary function is to store oxygen and facilitate its diffusion within muscle tissues. Reversibly binds oxygen through a pentacoordinated heme iron and enables its timely and efficient release as needed during periods of heightened demand. Depending on the oxidative conditions of tissues and cells, and in addition to its ability to bind oxygen, it also has a nitrite reductase activity whereby it regulates the production of bioactive nitric oxide. Under stress conditions, like hypoxia and anoxia, it also protects cells against reactive oxygen species thanks to its pseudoperoxidase activity. In Mustelus antarcticus (Gummy shark), this protein is Myoglobin (mb).